Here is a 776-residue protein sequence, read N- to C-terminus: Protein translocase subunit SecA 2 (776 aa).

ATP-binding positions include Q80, 98 to 102 (GEGKT), and D486.

It belongs to the SecA family. In terms of assembly, monomer and homodimer. Part of the essential Sec protein translocation apparatus which comprises SecA, SecYEG and auxiliary proteins SecDF. Other proteins may also be involved.

It localises to the cell membrane. The protein resides in the cytoplasm. It catalyses the reaction ATP + H2O + cellular proteinSide 1 = ADP + phosphate + cellular proteinSide 2.. Its function is as follows. Part of the Sec protein translocase complex. Interacts with the SecYEG preprotein conducting channel. Has a central role in coupling the hydrolysis of ATP to the transfer of proteins into and across the cell membrane, serving as an ATP-driven molecular motor driving the stepwise translocation of polypeptide chains across the membrane. The chain is Protein translocase subunit SecA 2 from Listeria monocytogenes serovar 1/2a (strain ATCC BAA-679 / EGD-e).